Here is a 272-residue protein sequence, read N- to C-terminus: S-adenosylmethionine decarboxylase proenzyme (272 aa).

The active-site Schiff-base intermediate with substrate; via pyruvic acid is Ser117. Position 117 is a pyruvic acid (Ser); by autocatalysis (Ser117). His122 (proton acceptor; for processing activity) is an active-site residue. Catalysis depends on Cys145, which acts as the Proton donor; for catalytic activity.

It belongs to the prokaryotic AdoMetDC family. Type 2 subfamily. In terms of assembly, heterooctamer of four alpha and four beta chains arranged as a tetramer of alpha/beta heterodimers. The cofactor is pyruvate. Post-translationally, is synthesized initially as an inactive proenzyme. Formation of the active enzyme involves a self-maturation process in which the active site pyruvoyl group is generated from an internal serine residue via an autocatalytic post-translational modification. Two non-identical subunits are generated from the proenzyme in this reaction, and the pyruvate is formed at the N-terminus of the alpha chain, which is derived from the carboxyl end of the proenzyme. The post-translation cleavage follows an unusual pathway, termed non-hydrolytic serinolysis, in which the side chain hydroxyl group of the serine supplies its oxygen atom to form the C-terminus of the beta chain, while the remainder of the serine residue undergoes an oxidative deamination to produce ammonia and the pyruvoyl group blocking the N-terminus of the alpha chain.

The enzyme catalyses S-adenosyl-L-methionine + H(+) = S-adenosyl 3-(methylsulfanyl)propylamine + CO2. The protein operates within amine and polyamine biosynthesis; S-adenosylmethioninamine biosynthesis; S-adenosylmethioninamine from S-adenosyl-L-methionine: step 1/1. Functionally, catalyzes the decarboxylation of S-adenosylmethionine to S-adenosylmethioninamine (dcAdoMet), the propylamine donor required for the synthesis of the polyamines spermine and spermidine from the diamine putrescine. This is S-adenosylmethionine decarboxylase proenzyme from Halorhodospira halophila (strain DSM 244 / SL1) (Ectothiorhodospira halophila (strain DSM 244 / SL1)).